The sequence spans 285 residues: ATP phosphoribosyltransferase (285 aa).

Belongs to the ATP phosphoribosyltransferase family. Long subfamily. Mg(2+) is required as a cofactor.

It is found in the cytoplasm. The catalysed reaction is 1-(5-phospho-beta-D-ribosyl)-ATP + diphosphate = 5-phospho-alpha-D-ribose 1-diphosphate + ATP. It participates in amino-acid biosynthesis; L-histidine biosynthesis; L-histidine from 5-phospho-alpha-D-ribose 1-diphosphate: step 1/9. With respect to regulation, feedback inhibited by histidine. In terms of biological role, catalyzes the condensation of ATP and 5-phosphoribose 1-diphosphate to form N'-(5'-phosphoribosyl)-ATP (PR-ATP). Has a crucial role in the pathway because the rate of histidine biosynthesis seems to be controlled primarily by regulation of HisG enzymatic activity. In Streptomyces avermitilis (strain ATCC 31267 / DSM 46492 / JCM 5070 / NBRC 14893 / NCIMB 12804 / NRRL 8165 / MA-4680), this protein is ATP phosphoribosyltransferase.